The following is a 153-amino-acid chain: 17.6 kDa class I heat shock protein (153 aa).

In terms of domain architecture, sHSP spans 38–153; sequence ETAAIVNARI…PMVKAIDISG (116 aa).

It belongs to the small heat shock protein (HSP20) family. As to quaternary structure, forms oligomeric structures.

It is found in the cytoplasm. The protein is 17.6 kDa class I heat shock protein (HSP17.6) of Helianthus annuus (Common sunflower).